The sequence spans 581 residues: Prolactin receptor (581 aa).

Positions 1-24 are cleaved as a signal peptide; sequence MKENAASRVVFILLLFLSVSLLNG. At 25–237 the chain is on the extracellular side; that stretch reads QSPPEKPKLV…NDFPVKDTSM (213 aa). Fibronectin type-III domains lie at 27–127 and 129–229; these read PPEK…IVEP and PPAN…IPND. A disulfide bridge connects residues cysteine 36 and cysteine 46. N-linked (GlcNAc...) asparagine glycosylation occurs at asparagine 59. Cysteine 75 and cysteine 86 are disulfide-bonded. Residue asparagine 132 is glycosylated (N-linked (GlcNAc...) asparagine). Residues aspartate 211 and histidine 212 each coordinate Zn(2+). Residues 215–219 carry the WSXWS motif motif; sequence WSEWS. The chain crosses the membrane as a helical span at residues 238–258; it reads WIFVAILSAVICLIMVWAVAL. At 259–581 the chain is on the cytoplasmic side; that stretch reads KGYSMVTCIL…PAKKAPPALP (323 aa). Positions 267–275 match the Box 1 motif motif; it reads ILPPVPGPK. Disordered stretches follow at residues 324–384 and 458–499; these read QLMP…EKLE and DQHA…PRPQ. Composition is skewed to basic and acidic residues over residues 329–349, 375–384, and 469–483; these read PSKE…DSDS, HTPEGPEKLE, and ETGR…RESE.

Belongs to the type I cytokine receptor family. Type 1 subfamily. As to quaternary structure, interacts with SMARCA1. Interacts with NEK3 and VAV2 and this interaction is prolactin-dependent. Expressed in all tissues examined; liver, peripheral blood lymphocytes, endometrium, corpus luteum, intestine, fetal thymus, fetal spleen, fetal liver and fetal brain.

Its subcellular location is the membrane. In terms of biological role, this is a receptor for the anterior pituitary hormone prolactin. In Bos taurus (Bovine), this protein is Prolactin receptor (PRLR).